The following is a 564-amino-acid chain: Dihydroxy-acid dehydratase 2 (564 aa).

[2Fe-2S] cluster is bound at residue C59. D91 contributes to the Mg(2+) binding site. C132 is a [2Fe-2S] cluster binding site. Residues D133 and K134 each contribute to the Mg(2+) site. K134 carries the post-translational modification N6-carboxylysine. C204 contributes to the [2Fe-2S] cluster binding site. Position 454 (E454) interacts with Mg(2+). The active-site Proton acceptor is the S480.

The protein belongs to the IlvD/Edd family. Homodimer. The cofactor is [2Fe-2S] cluster. It depends on Mg(2+) as a cofactor.

The catalysed reaction is (2R)-2,3-dihydroxy-3-methylbutanoate = 3-methyl-2-oxobutanoate + H2O. It catalyses the reaction (2R,3R)-2,3-dihydroxy-3-methylpentanoate = (S)-3-methyl-2-oxopentanoate + H2O. Its pathway is amino-acid biosynthesis; L-isoleucine biosynthesis; L-isoleucine from 2-oxobutanoate: step 3/4. It functions in the pathway amino-acid biosynthesis; L-valine biosynthesis; L-valine from pyruvate: step 3/4. In terms of biological role, functions in the biosynthesis of branched-chain amino acids. Catalyzes the dehydration of (2R,3R)-2,3-dihydroxy-3-methylpentanoate (2,3-dihydroxy-3-methylvalerate) into 2-oxo-3-methylpentanoate (2-oxo-3-methylvalerate) and of (2R)-2,3-dihydroxy-3-methylbutanoate (2,3-dihydroxyisovalerate) into 2-oxo-3-methylbutanoate (2-oxoisovalerate), the penultimate precursor to L-isoleucine and L-valine, respectively. The protein is Dihydroxy-acid dehydratase 2 of Staphylococcus saprophyticus subsp. saprophyticus (strain ATCC 15305 / DSM 20229 / NCIMB 8711 / NCTC 7292 / S-41).